The primary structure comprises 178 residues: Cytidylate kinase (178 aa).

7-15 is a binding site for ATP; it reads GLPGSGTTS.

Belongs to the cytidylate kinase family. Type 2 subfamily.

Its subcellular location is the cytoplasm. It carries out the reaction CMP + ATP = CDP + ADP. The enzyme catalyses dCMP + ATP = dCDP + ADP. The protein is Cytidylate kinase of Methanospirillum hungatei JF-1 (strain ATCC 27890 / DSM 864 / NBRC 100397 / JF-1).